The chain runs to 393 residues: Succinate--CoA ligase [ADP-forming] subunit beta (393 aa).

The region spanning 9 to 237 (RDLFAKHGVP…KDAANPLEAA (229 aa)) is the ATP-grasp domain. ATP is bound by residues K45, 52 to 54 (GRG), E92, P95, and E100. The Mg(2+) site is built by N192 and D206. Substrate is bound by residues N257 and 319 to 321 (GIT).

Belongs to the succinate/malate CoA ligase beta subunit family. As to quaternary structure, heterotetramer of two alpha and two beta subunits. Mg(2+) is required as a cofactor.

The catalysed reaction is succinate + ATP + CoA = succinyl-CoA + ADP + phosphate. It carries out the reaction GTP + succinate + CoA = succinyl-CoA + GDP + phosphate. The protein operates within carbohydrate metabolism; tricarboxylic acid cycle; succinate from succinyl-CoA (ligase route): step 1/1. Functionally, succinyl-CoA synthetase functions in the citric acid cycle (TCA), coupling the hydrolysis of succinyl-CoA to the synthesis of either ATP or GTP and thus represents the only step of substrate-level phosphorylation in the TCA. The beta subunit provides nucleotide specificity of the enzyme and binds the substrate succinate, while the binding sites for coenzyme A and phosphate are found in the alpha subunit. This Streptomyces griseus subsp. griseus (strain JCM 4626 / CBS 651.72 / NBRC 13350 / KCC S-0626 / ISP 5235) protein is Succinate--CoA ligase [ADP-forming] subunit beta.